A 343-amino-acid polypeptide reads, in one-letter code: Holliday junction branch migration complex subunit RuvB (343 aa).

A disordered region spans residues 1–26; the sequence is MKEKILTFSSDPSSPVTRHETEEDTG. The interval 3 to 193 is large ATPase domain (RuvB-L); the sequence is EKILTFSSDP…FGIFRKFDFY (191 aa). A compositionally biased stretch (polar residues) spans 7-16; that stretch reads TFSSDPSSPV. ATP is bound by residues L32, R33, G74, K77, T78, T79, 140–142, R183, Y193, and R230; that span reads EDF. Position 78 (T78) interacts with Mg(2+). The interval 194–264 is small ATPAse domain (RuvB-S); sequence SRQDLARIVS…AIDDALALEG (71 aa). A head domain (RuvB-H) region spans residues 267 to 343; that stretch reads EKGLTGLDRS…YRHLGVQWRG (77 aa). DNA is bound by residues R322 and R327.

Belongs to the RuvB family. As to quaternary structure, homohexamer. Forms an RuvA(8)-RuvB(12)-Holliday junction (HJ) complex. HJ DNA is sandwiched between 2 RuvA tetramers; dsDNA enters through RuvA and exits via RuvB. An RuvB hexamer assembles on each DNA strand where it exits the tetramer. Each RuvB hexamer is contacted by two RuvA subunits (via domain III) on 2 adjacent RuvB subunits; this complex drives branch migration. In the full resolvosome a probable DNA-RuvA(4)-RuvB(12)-RuvC(2) complex forms which resolves the HJ.

It is found in the cytoplasm. It carries out the reaction ATP + H2O = ADP + phosphate + H(+). In terms of biological role, the RuvA-RuvB-RuvC complex processes Holliday junction (HJ) DNA during genetic recombination and DNA repair, while the RuvA-RuvB complex plays an important role in the rescue of blocked DNA replication forks via replication fork reversal (RFR). RuvA specifically binds to HJ cruciform DNA, conferring on it an open structure. The RuvB hexamer acts as an ATP-dependent pump, pulling dsDNA into and through the RuvAB complex. RuvB forms 2 homohexamers on either side of HJ DNA bound by 1 or 2 RuvA tetramers; 4 subunits per hexamer contact DNA at a time. Coordinated motions by a converter formed by DNA-disengaged RuvB subunits stimulates ATP hydrolysis and nucleotide exchange. Immobilization of the converter enables RuvB to convert the ATP-contained energy into a lever motion, pulling 2 nucleotides of DNA out of the RuvA tetramer per ATP hydrolyzed, thus driving DNA branch migration. The RuvB motors rotate together with the DNA substrate, which together with the progressing nucleotide cycle form the mechanistic basis for DNA recombination by continuous HJ branch migration. Branch migration allows RuvC to scan DNA until it finds its consensus sequence, where it cleaves and resolves cruciform DNA. The protein is Holliday junction branch migration complex subunit RuvB of Desulfosudis oleivorans (strain DSM 6200 / JCM 39069 / Hxd3) (Desulfococcus oleovorans).